Reading from the N-terminus, the 180-residue chain is MAETATIARPYAEALFRVASEAGAGNLGAWSELVSEMGQVAANPDMQALATDPNISGDKLEEVFLSVLKSPVNDEARRFVKLLVENSRLTALPEIAEQFHALKNAREGSSDVEITSAFPLDASQTNELVAALERKFGRKLYAKVAVDPSLIGGVSVKVGDEVLDTSVRSRLAAMQAALTA.

Belongs to the ATPase delta chain family. As to quaternary structure, F-type ATPases have 2 components, F(1) - the catalytic core - and F(0) - the membrane proton channel. F(1) has five subunits: alpha(3), beta(3), gamma(1), delta(1), epsilon(1). F(0) has three main subunits: a(1), b(2) and c(10-14). The alpha and beta chains form an alternating ring which encloses part of the gamma chain. F(1) is attached to F(0) by a central stalk formed by the gamma and epsilon chains, while a peripheral stalk is formed by the delta and b chains.

The protein localises to the cell inner membrane. Functionally, f(1)F(0) ATP synthase produces ATP from ADP in the presence of a proton or sodium gradient. F-type ATPases consist of two structural domains, F(1) containing the extramembraneous catalytic core and F(0) containing the membrane proton channel, linked together by a central stalk and a peripheral stalk. During catalysis, ATP synthesis in the catalytic domain of F(1) is coupled via a rotary mechanism of the central stalk subunits to proton translocation. In terms of biological role, this protein is part of the stalk that links CF(0) to CF(1). It either transmits conformational changes from CF(0) to CF(1) or is implicated in proton conduction. The chain is ATP synthase subunit delta from Cupriavidus metallidurans (strain ATCC 43123 / DSM 2839 / NBRC 102507 / CH34) (Ralstonia metallidurans).